A 118-amino-acid polypeptide reads, in one-letter code: Putative pterin-4-alpha-carbinolamine dehydratase (118 aa).

The protein belongs to the pterin-4-alpha-carbinolamine dehydratase family.

It carries out the reaction (4aS,6R)-4a-hydroxy-L-erythro-5,6,7,8-tetrahydrobiopterin = (6R)-L-erythro-6,7-dihydrobiopterin + H2O. In Xanthomonas axonopodis pv. citri (strain 306), this protein is Putative pterin-4-alpha-carbinolamine dehydratase (phhB).